Here is a 141-residue protein sequence, read N- to C-terminus: VLTEDDKNHIRAIWGHVDNNPEAFGVEALTRLFLAYPATKTYFAHFDLNPGSAQIKAHGKKVVDALTQAVNNLDDIPDALAKLADLHAEKLRVDPVNFGLLGHCILVTIAAHNHGPLKADVALSMDKFLTKVAKTLVAHYR.

The 141-residue stretch at 1 to 141 (VLTEDDKNHI…VAKTLVAHYR (141 aa)) folds into the Globin domain. His58 contacts O2. Residue His87 participates in heme b binding.

It belongs to the globin family. As to quaternary structure, heterotetramer of two alpha chains and two beta chains. As to expression, red blood cells.

Involved in oxygen transport from the lung to the various peripheral tissues. This chain is Hemoglobin subunit alpha-1, found in Iguana iguana (Common iguana).